A 185-amino-acid polypeptide reads, in one-letter code: Elongation factor P (185 aa).

It belongs to the elongation factor P family.

The protein resides in the cytoplasm. It participates in protein biosynthesis; polypeptide chain elongation. Involved in peptide bond synthesis. Stimulates efficient translation and peptide-bond synthesis on native or reconstituted 70S ribosomes in vitro. Probably functions indirectly by altering the affinity of the ribosome for aminoacyl-tRNA, thus increasing their reactivity as acceptors for peptidyl transferase. This Trichormus variabilis (strain ATCC 29413 / PCC 7937) (Anabaena variabilis) protein is Elongation factor P.